Reading from the N-terminus, the 158-residue chain is Small ribosomal subunit protein uS19 (158 aa).

The protein belongs to the universal ribosomal protein uS19 family.

Its function is as follows. Protein S19 forms a complex with S13 that binds strongly to the 16S ribosomal RNA. The polypeptide is Small ribosomal subunit protein uS19 (Pyrobaculum aerophilum (strain ATCC 51768 / DSM 7523 / JCM 9630 / CIP 104966 / NBRC 100827 / IM2)).